We begin with the raw amino-acid sequence, 696 residues long: Putative zinc metalloproteinase YIL108W (696 aa).

Residue Lys-245 forms a Glycyl lysine isopeptide (Lys-Gly) (interchain with G-Cter in ubiquitin) linkage. A Zn(2+)-binding site is contributed by His-318. Glu-319 is a catalytic residue. Zn(2+) contacts are provided by His-322 and His-328. Ser-361 is subject to Phosphoserine. Glycyl lysine isopeptide (Lys-Gly) (interchain with G-Cter in ubiquitin) cross-links involve residues Lys-478, Lys-518, Lys-579, Lys-590, and Lys-596. Residues 522–695 form the Jacalin-type lectin domain; the sequence is GIKSPLYGRS…VDAFGIIYGA (174 aa).

This sequence belongs to the peptidase M10B family. Zn(2+) serves as cofactor.

It is found in the cytoplasm. In Saccharomyces cerevisiae (strain ATCC 204508 / S288c) (Baker's yeast), this protein is Putative zinc metalloproteinase YIL108W.